An 88-amino-acid chain; its full sequence is Sec-independent protein translocase protein TatA (88 aa).

A helical membrane pass occupies residues Ile-3 to Gly-23. The disordered stretch occupies residues Met-56–Lys-88. The span at Ser-67–Ile-76 shows a compositional bias: polar residues. The span at Asn-77–Lys-88 shows a compositional bias: basic and acidic residues.

Belongs to the TatA/E family. Forms a complex with TatC.

It localises to the cell inner membrane. Functionally, part of the twin-arginine translocation (Tat) system that transports large folded proteins containing a characteristic twin-arginine motif in their signal peptide across membranes. TatA could form the protein-conducting channel of the Tat system. This Prochlorococcus marinus (strain AS9601) protein is Sec-independent protein translocase protein TatA.